Consider the following 451-residue polypeptide: Phosphoglucosamine mutase (451 aa).

S101 functions as the Phosphoserine intermediate in the catalytic mechanism. Residues S101, D243, D245, and D247 each contribute to the Mg(2+) site. The residue at position 101 (S101) is a Phosphoserine.

The protein belongs to the phosphohexose mutase family. It depends on Mg(2+) as a cofactor. Post-translationally, activated by phosphorylation.

It carries out the reaction alpha-D-glucosamine 1-phosphate = D-glucosamine 6-phosphate. Functionally, catalyzes the conversion of glucosamine-6-phosphate to glucosamine-1-phosphate. The protein is Phosphoglucosamine mutase of Geobacter metallireducens (strain ATCC 53774 / DSM 7210 / GS-15).